The primary structure comprises 145 residues: D-aminoacyl-tRNA deacylase (145 aa).

The short motif at 137–138 (GP) is the Gly-cisPro motif, important for rejection of L-amino acids element.

Belongs to the DTD family. In terms of assembly, homodimer.

It localises to the cytoplasm. It catalyses the reaction glycyl-tRNA(Ala) + H2O = tRNA(Ala) + glycine + H(+). It carries out the reaction a D-aminoacyl-tRNA + H2O = a tRNA + a D-alpha-amino acid + H(+). Its function is as follows. An aminoacyl-tRNA editing enzyme that deacylates mischarged D-aminoacyl-tRNAs. Also deacylates mischarged glycyl-tRNA(Ala), protecting cells against glycine mischarging by AlaRS. Acts via tRNA-based rather than protein-based catalysis; rejects L-amino acids rather than detecting D-amino acids in the active site. By recycling D-aminoacyl-tRNA to D-amino acids and free tRNA molecules, this enzyme counteracts the toxicity associated with the formation of D-aminoacyl-tRNA entities in vivo and helps enforce protein L-homochirality. The sequence is that of D-aminoacyl-tRNA deacylase from Shewanella sp. (strain MR-4).